Reading from the N-terminus, the 416-residue chain is Protein-glutamine gamma-glutamyltransferase (416 aa).

A signal peptide (tat-type signal) is located at residues 1–29 (MHKRRRLLAFATVGAVICTAGFTPSVSQA). Residues 30-85 (ASSGDGEEKGSYAETHGLTADDVESINALNERALTLGQPGKPPKELPPSASAPSRA) constitute a propeptide that is removed on maturation. Residues 64-103 (TLGQPGKPPKELPPSASAPSRAPSDDRETPPAEPLDRMPE) form a disordered region. A compositionally biased stretch (low complexity) spans 76–85 (PPSASAPSRA). Positions 86–103 (PSDDRETPPAEPLDRMPE) are enriched in basic and acidic residues. Cysteine 149 is an active-site residue. The tract at residues 290–331 (GQDQRGSSDKRKYGDPEAFRPDQGTGLVDMSKDRSIPRSPAK) is disordered. The span at 295 to 309 (GSSDKRKYGDPEAFR) shows a compositional bias: basic and acidic residues. Active-site residues include aspartate 340 and histidine 359.

It belongs to the bacterial TGase family. Post-translationally, predicted to be exported by the Tat system. The position of the signal peptide cleavage has not been experimentally proven.

It carries out the reaction L-glutaminyl-[protein] + L-lysyl-[protein] = [protein]-L-lysyl-N(6)-5-L-glutamyl-[protein] + NH4(+). In terms of biological role, catalyzes the cross-linking of proteins and the conjugation of polyamines to proteins. In Streptomyces cinnamoneus (Streptoverticillium cinnamoneum), this protein is Protein-glutamine gamma-glutamyltransferase.